The primary structure comprises 413 residues: Enhanced ethylene response protein 5 (413 aa).

The region spanning 216–402 (VTYMYYTGRL…KVVVLSKQDP (187 aa)) is the PCI domain.

In terms of assembly, interacts with EIN2 (via C-terminus). May also interact weakly with CSN8. Interacts with DSS1(V), AMPD, SAC3A, SAC3B and At5g61290 (AC Q9FLK4). Interacts with UCH1 and UCH2. Interacts with NUP1, anchoring the TREX-2 complex on the nuclear pore complex. As to expression, expressed at low levels in roots, leaves, stems and shoots. Detected in seedlings, roots, leaves and anthers.

It is found in the nucleus. Involved in the regulation of ethylene response. Probable TREX-2 component required for nuclear RNA export. The TREX-2 complex (transcription and export complex 2) functions in docking export-competent ribonucleoprotein particles (mRNPs) to the nuclear entrance of the nuclear pore complex (nuclear basket). TREX-2 participates in mRNA export and accurate chromatin positioning in the nucleus by tethering genes to the nuclear periphery. This chain is Enhanced ethylene response protein 5, found in Arabidopsis thaliana (Mouse-ear cress).